The following is an 805-amino-acid chain: MSKLTTGSFSIEDLESVQITINNIVGAAKEAAEEKAKELGPMGPTAMAGLASYRSWNLLLLDRYEPVLTPMCDQCCYCTYGPCDLSGNKRGACGIDMAGQTGREFFLRVITGTACHAAHGRHLLDHVIEVFGEDLPLNLGESNVLTPNVTICTGLSPKTLGECRAPMEYVEEQLTQLLATIHAGQESAEIDYDSKALFSGSLDHVGMEVSDIAQVSAYDFPKADPEAPLIEIGMGSIDKSKPLIVAIGHNVAGVTYIMDYMEENNLTDKMEIAGLCCTAFDMTRYKEADRRAPYAKIVGSLAKELKVIRSGMPDVIVVDEQCVRGDVLSESMKLKIPVIASNEKIMMGLPDRTDADVDSIVEEIKSGAIPGCVMLDYDKLGELIPKIAEVMAPIRDAEGITAIPTDEEFKVYIDKCVKCGECMLACPEELDIPEALEYAAKGSYEYLEALHDVCIGCRRCEQVCKKEIPILNVLEKAAQKSISEEKGWVRSGRGQASDAEIRAEGLNLVMGTTPGIIAIIGCPNYPAGTKDVYNIAEEFLKRNYLVVVSGCSAMDIGMYKDDDGKTLYERYPGTFSGGGLLNTGSCVSNAHITGAAEKVAGIFAQRTLAGNLAEVADYTLNRVGACGLAWGAYSQKAASIGTGCNIYGIPAVLGPHSSKYRRALIAKTYEEDKWKVFDARDGSEMNIPPAPEFLLTTAETWQEALPMMAKACIRPSDNNMGRSIKLTHWMELSKKYLGVEPEDWWKFVRNEADLPLAKREELLKRLEAEQGWEIDWKRKKIISGPKIKFDVSAQPTNLKRLCKEA.

Cysteine 72, cysteine 75, cysteine 76, cysteine 78, cysteine 83, and cysteine 93 together coordinate [4Fe-4S] cluster. Residue histidine 116 participates in CO binding. 3 residues coordinate [Ni-4Fe-4S] cluster: histidine 249, cysteine 277, and cysteine 322. 4Fe-4S ferredoxin-type domains follow at residues 407 to 435 and 445 to 474; these read EEFKVYIDKCVKCGECMLACPEELDIPEA and EYLEALHDVCIGCRRCEQVCKKEIPILNVL. Residues cysteine 416, cysteine 419, cysteine 422, cysteine 426, cysteine 454, cysteine 457, cysteine 460, and cysteine 464 each coordinate [4Fe-4S] cluster. [Ni-4Fe-4S] cluster-binding residues include cysteine 522, cysteine 551, and cysteine 586.

This sequence belongs to the Ni-containing carbon monoxide dehydrogenase family. As to quaternary structure, heterotetramer of two alpha and two epsilon subunits. The ACDS complex is made up of alpha, epsilon, beta, gamma and delta subunits with a probable stoichiometry of (alpha(2)epsilon(2))(4)-beta(8)-(gamma(1)delta(1))(8). [4Fe-4S] cluster is required as a cofactor. Requires [Ni-4Fe-4S] cluster as cofactor.

It carries out the reaction CO + 2 oxidized [2Fe-2S]-[ferredoxin] + H2O = 2 reduced [2Fe-2S]-[ferredoxin] + CO2 + 2 H(+). Its pathway is one-carbon metabolism; methanogenesis from acetate. Part of the ACDS complex that catalyzes the reversible cleavage of acetyl-CoA, allowing growth on acetate as sole source of carbon and energy. The alpha-epsilon subcomponent functions as a carbon monoxide dehydrogenase. The sequence is that of Acetyl-CoA decarbonylase/synthase complex subunit alpha 3 from Methanosarcina acetivorans (strain ATCC 35395 / DSM 2834 / JCM 12185 / C2A).